Here is a 339-residue protein sequence, read N- to C-terminus: Tetraacyldisaccharide 4'-kinase (339 aa).

Residue 62-69 (VAGGTGKT) participates in ATP binding.

The protein belongs to the LpxK family.

The enzyme catalyses a lipid A disaccharide + ATP = a lipid IVA + ADP + H(+). Its pathway is glycolipid biosynthesis; lipid IV(A) biosynthesis; lipid IV(A) from (3R)-3-hydroxytetradecanoyl-[acyl-carrier-protein] and UDP-N-acetyl-alpha-D-glucosamine: step 6/6. Its function is as follows. Transfers the gamma-phosphate of ATP to the 4'-position of a tetraacyldisaccharide 1-phosphate intermediate (termed DS-1-P) to form tetraacyldisaccharide 1,4'-bis-phosphate (lipid IVA). This Xylella fastidiosa (strain M23) protein is Tetraacyldisaccharide 4'-kinase.